We begin with the raw amino-acid sequence, 505 residues long: TBC1 domain family member 22B (505 aa).

Alanine 2 carries the N-acetylalanine modification. 2 positions are modified to phosphoserine: serine 58 and serine 116. The segment at 105 to 146 (SKLRVKPERSQSTTSDVPANYKVIKSSSDAQLSRNSSDTCLR) is disordered. A compositionally biased stretch (polar residues) spans 129–146 (KSSSDAQLSRNSSDTCLR). Position 154 is a phosphoserine (serine 154). Residues 210–434 (GVPREVRPIT…RLWDTYQSEP (225 aa)) form the Rab-GAP TBC domain.

Interacts with ACBD3 and ARFGEF1. Interacts with YWHAB, YWHAE, YWHAG, YWHAH, YWHAQ and YWHAZ.

Its function is as follows. May act as a GTPase-activating protein for Rab family protein(s). This Homo sapiens (Human) protein is TBC1 domain family member 22B (TBC1D22B).